Here is a 531-residue protein sequence, read N- to C-terminus: MEGESYNESTVNGTPVNHQALERHGLWEVITIAVVTAVVSLMTIVGNVLVMISFKVNSQLKTVNNYYLLSLACADLIIGIFSMNLYTTYILMGRWVLGSLACDLWLALDYVASNASVMNLLVISFDRYFSITRPLTYRAKRTPKRAGIMIGLAWLVSFILWAPAILCWQYLVGKRTVPPDECQIQFLSEPTITFGTAIAAFYIPVSVMTILYCRIYRETEKRTKDLADLQGSDSVAEAKKREPAQRTLLRSFFSCPRPSLAQRERNQASWSSSRRSTSTTGKTTQATDLSADWEKAEQVTTCSSYPSSEDEAKPTTDPVFQMVYKSEAKESPGKESNTQETKETVVNTRTENSDYDTPKYFLSPAAAHRLKSQKCVAYKFRLVVKADGTQETNNGCRKVKIMPCSFPVSKDPSTKGPDPNLSHQMTKRKRMVLVKERKAAQTLSAILLAFIITWTPYNIMVLVSTFCDKCVPVTLWHLGYWLCYVNSTINPICYALCNRTFRKTFKLLLLCRWKKKKVEEKLYWQGNSKLP.

The Extracellular portion of the chain corresponds to 1–28; it reads MEGESYNESTVNGTPVNHQALERHGLWE. N7 carries N-linked (GlcNAc...) asparagine glycosylation. Residues 29-52 traverse the membrane as a helical segment; it reads VITIAVVTAVVSLMTIVGNVLVMI. Residues 53–65 are Cytoplasmic-facing; the sequence is SFKVNSQLKTVNN. The helical transmembrane segment at 66-86 threads the bilayer; sequence YYLLSLACADLIIGIFSMNLY. Residues 87-103 are Extracellular-facing; it reads TTYILMGRWVLGSLACD. Cysteines 102 and 182 form a disulfide. Residues 104-125 form a helical membrane-spanning segment; the sequence is LWLALDYVASNASVMNLLVISF. At 126–145 the chain is on the cytoplasmic side; the sequence is DRYFSITRPLTYRAKRTPKR. Residues 146 to 168 form a helical membrane-spanning segment; sequence AGIMIGLAWLVSFILWAPAILCW. At 169–190 the chain is on the extracellular side; the sequence is QYLVGKRTVPPDECQIQFLSEP. The chain crosses the membrane as a helical span at residues 191–213; that stretch reads TITFGTAIAAFYIPVSVMTILYC. Residues 214 to 442 lie on the Cytoplasmic side of the membrane; sequence RIYRETEKRT…LVKERKAAQT (229 aa). Disordered regions lie at residues 259–295 and 327–346; these read SLAQ…DWEK and EAKE…ETVV. Low complexity predominate over residues 267–287; it reads QASWSSSRRSTSTTGKTTQAT. A compositionally biased stretch (polar residues) spans 334 to 346; that stretch reads KESNTQETKETVV. A helical transmembrane segment spans residues 443–463; it reads LSAILLAFIITWTPYNIMVLV. Over 464-477 the chain is Extracellular; that stretch reads STFCDKCVPVTLWH. The chain crosses the membrane as a helical span at residues 478–497; the sequence is LGYWLCYVNSTINPICYALC. Topologically, residues 498 to 531 are cytoplasmic; it reads NRTFRKTFKLLLLCRWKKKKVEEKLYWQGNSKLP. A phosphothreonine mark is found at T500 and T504.

The protein belongs to the G-protein coupled receptor 1 family. Muscarinic acetylcholine receptor subfamily. CHRM5 sub-subfamily.

It localises to the cell membrane. The protein localises to the postsynaptic cell membrane. In terms of biological role, the muscarinic acetylcholine receptor mediates various cellular responses, including inhibition of adenylate cyclase, breakdown of phosphoinositides and modulation of potassium channels through the action of G proteins. Primary transducing effect is Pi turnover. The chain is Muscarinic acetylcholine receptor M5 (Chrm5) from Rattus norvegicus (Rat).